We begin with the raw amino-acid sequence, 162 residues long: Large ribosomal subunit protein uL11 (162 aa).

Positions 1-27 (MAGTIEVLVPGGEANPGPPLGPELGPT) are disordered.

Belongs to the universal ribosomal protein uL11 family. In terms of assembly, part of the 50S ribosomal subunit. Forms part of the ribosomal stalk which helps the ribosome interact with GTP-bound translation factors. Forms a heptameric L10(L12)2(L12)2(L12)2 complex, where L10 forms an elongated spine to which 3 L12 dimers bind in a sequential fashion.

Forms part of the ribosomal stalk which helps the ribosome interact with GTP-bound translation factors. The chain is Large ribosomal subunit protein uL11 from Haloarcula marismortui (strain ATCC 43049 / DSM 3752 / JCM 8966 / VKM B-1809) (Halobacterium marismortui).